Consider the following 109-residue polypeptide: Homeobox protein E60 (109 aa).

Residues Pro-1–Gln-31 are disordered. Residues Glu-20–Ser-79 constitute a DNA-binding region (homeobox).

The protein belongs to the engrailed homeobox family.

The protein localises to the nucleus. This is Homeobox protein E60 from Apis mellifera (Honeybee).